Here is a 453-residue protein sequence, read N- to C-terminus: Probable 1,4-beta-D-glucan cellobiohydrolase A (453 aa).

The signal sequence occupies residues 1–17 (MYQRALLFSALATAVSA). Residue Glu226 is the Nucleophile of the active site. Glu231 (proton donor) is an active-site residue. N-linked (GlcNAc...) asparagine glycosylation is present at Asn284.

This sequence belongs to the glycosyl hydrolase 7 (cellulase C) family.

It is found in the secreted. The enzyme catalyses Hydrolysis of (1-&gt;4)-beta-D-glucosidic linkages in cellulose and cellotetraose, releasing cellobiose from the non-reducing ends of the chains.. Its function is as follows. The biological conversion of cellulose to glucose generally requires three types of hydrolytic enzymes: (1) Endoglucanases which cut internal beta-1,4-glucosidic bonds; (2) Exocellobiohydrolases that cut the disaccharide cellobiose from the non-reducing end of the cellulose polymer chain; (3) Beta-1,4-glucosidases which hydrolyze the cellobiose and other short cello-oligosaccharides to glucose. This is Probable 1,4-beta-D-glucan cellobiohydrolase A (cbhA) from Aspergillus clavatus (strain ATCC 1007 / CBS 513.65 / DSM 816 / NCTC 3887 / NRRL 1 / QM 1276 / 107).